The chain runs to 273 residues: NADH-ubiquinone oxidoreductase 29.9 kDa subunit, mitochondrial (273 aa).

A mitochondrion-targeting transit peptide spans 1–8 (MRAALRLL).

It belongs to the complex I NDUFA5 subunit family. As to quaternary structure, complex I is composed of about 40 different subunits.

It is found in the mitochondrion inner membrane. Its function is as follows. Accessory subunit of the mitochondrial membrane respiratory chain NADH dehydrogenase (Complex I), that is believed not to be involved in catalysis. Complex I functions in the transfer of electrons from NADH to the respiratory chain. The immediate electron acceptor for the enzyme is believed to be ubiquinone. This chain is NADH-ubiquinone oxidoreductase 29.9 kDa subunit, mitochondrial (nuo-32), found in Neurospora crassa (strain ATCC 24698 / 74-OR23-1A / CBS 708.71 / DSM 1257 / FGSC 987).